The following is a 318-amino-acid chain: CMRF35-like molecule 8 (318 aa).

Residues 1–27 (MTQLASAVWLPTLLLLLLLFWLPGCVP) form the signal peptide. The 102-residue stretch at 28-129 (LHGPSTMSGS…FDGSLGFDKY (102 aa)) folds into the Ig-like V-type domain. Residues 28 to 185 (LHGPSTMSGS…HDYSQGLRLP (158 aa)) lie on the Extracellular side of the membrane. C46 and C113 are oxidised to a cystine. An N-linked (GlcNAc...) asparagine glycan is attached at N93. Low complexity predominate over residues 139–148 (SEDPVSSPGP). The interval 139–174 (SEDPVSSPGPTLETPVVSTSLPTKGPALGSNTEGHR) is disordered. The chain crosses the membrane as a helical span at residues 186–206 (ALLSVLALLLFLLVGTSLLAW). Topologically, residues 207 to 318 (RMFQKRLVKA…PRKGLSDLYL (112 aa)) are cytoplasmic. Over residues 284–296 (QDSHANGDSLHQP) the composition is skewed to polar residues. Residues 284-318 (QDSHANGDSLHQPQDQKAEYSEIQKPRKGLSDLYL) form a disordered region. Positions 297–308 (QDQKAEYSEIQK) are enriched in basic and acidic residues. Y303 is subject to Phosphotyrosine.

It belongs to the CD300 family. Upon tyrosine-phosphorylation, interacts with PTN6/SHP-1 and PTPN11/SHP-2 and INPP5D. Post-translationally, phosphorylated on tyrosine. In terms of processing, N-glycosylated. As to expression, present on the surface of the majority of myeloid cells and a subset of B-cells. Present on the surface of NK cells after IL-12 stimulation.

The protein localises to the cell membrane. Inhibitory receptor which may contribute to the down-regulation of cytolytic activity in natural killer (NK) cells, and to the down-regulation of mast cell degranulation. Negatively regulates the Toll-like receptor (TLR) signaling mediated by MYD88 but not TRIF through activation of PTPN6. The sequence is that of CMRF35-like molecule 8 (Cd300a) from Mus musculus (Mouse).